We begin with the raw amino-acid sequence, 396 residues long: MTYITATYQLGTTDQLPKRAEQIALGLTVGSWTDLNHLEQQQLESFKGQVVHTEEHDGKGYITIRYPEHNVSRDFSAILTTVFGKLSLDGQIKLTDLQLPASFTTDFPGAKFGIEGVRQLIQVHDRPLLMSIFKGVIGRDLTFLREQLEAQLAGGIDLVKDDEILYDNPLTPALDRARIGRDVLNAHYEKTGKRALYAITLSGSVFGLKDQTKRLIEAGATAFLLNTFTYGLDVLRELAADPDISVPIFNHPALSGALIASPEYGIAAPVLLGTLPRLAGADLTLFPSPYGNVALAKDLARGIAVEATRIGETKTILPVPSAGIHPGLVAQLVHDFGTDSVINAGGGVHGHPQGAAAGVLAFRQALDAALAGESLTSAATRQEELRVALDAWGITK.

The active-site Proton acceptor is K85. Substrate-binding positions include K134, 160 to 163 (KDDE), H251, G323, and 345 to 346 (GG). The Mg(2+) site is built by K160, D162, and E163. An N6-carboxylysine modification is found at K160.

Belongs to the RuBisCO large chain family. Type IV subfamily. Homodimer. Mg(2+) is required as a cofactor.

It catalyses the reaction 5-methylsulfanyl-2,3-dioxopentyl phosphate = 2-hydroxy-5-methylsulfanyl-3-oxopent-1-enyl phosphate. The protein operates within amino-acid biosynthesis; L-methionine biosynthesis via salvage pathway; L-methionine from S-methyl-5-thio-alpha-D-ribose 1-phosphate: step 3/6. Catalyzes the enolization of 2,3-diketo-5-methylthiopentyl-1-phosphate (DK-MTP-1-P) into 2-hydroxy-3-keto-5-methylthiopentenyl-1-phosphate (HK-MTPenyl-1-P). This Exiguobacterium sibiricum (strain DSM 17290 / CCUG 55495 / CIP 109462 / JCM 13490 / 255-15) protein is 2,3-diketo-5-methylthiopentyl-1-phosphate enolase.